The following is an 85-amino-acid chain: MAHKKGASSTRNGRDSNAQRLGVKRFGGQAVNAGEILVRQRGTHFHPGTGVGRGGDDTLFALAAGAVQFGTHRGRKVVNIVPLAV.

Residues 1–22 (MAHKKGASSTRNGRDSNAQRLG) are disordered. Residues 7 to 19 (ASSTRNGRDSNAQ) show a composition bias toward polar residues.

It belongs to the bacterial ribosomal protein bL27 family.

The polypeptide is Large ribosomal subunit protein bL27 (rpmA) (Streptomyces griseus).